A 150-amino-acid chain; its full sequence is Large-conductance mechanosensitive channel (150 aa).

2 consecutive transmembrane segments (helical) span residues valine 14–leucine 34 and glycine 81–isoleucine 101.

It belongs to the MscL family. Homopentamer.

It is found in the cell membrane. In terms of biological role, channel that opens in response to stretch forces in the membrane lipid bilayer. May participate in the regulation of osmotic pressure changes within the cell. This chain is Large-conductance mechanosensitive channel, found in Desulfitobacterium hafniense (strain DSM 10664 / DCB-2).